Consider the following 97-residue polypeptide: Small ribosomal subunit protein bS20 (97 aa).

It belongs to the bacterial ribosomal protein bS20 family.

Functionally, binds directly to 16S ribosomal RNA. The polypeptide is Small ribosomal subunit protein bS20 (Prochlorococcus marinus (strain MIT 9312)).